We begin with the raw amino-acid sequence, 203 residues long: GTP cyclohydrolase-2 (203 aa).

49–53 contacts GTP; it reads RIHSE. Zn(2+) contacts are provided by C54, C65, and C67. Residues Q70, 92–94, and T114 each bind GTP; that span reads EGR. D126 serves as the catalytic Proton acceptor. Residue R128 is the Nucleophile of the active site. Positions 149 and 154 each coordinate GTP.

It belongs to the GTP cyclohydrolase II family. Zn(2+) is required as a cofactor.

The catalysed reaction is GTP + 4 H2O = 2,5-diamino-6-hydroxy-4-(5-phosphoribosylamino)-pyrimidine + formate + 2 phosphate + 3 H(+). It functions in the pathway cofactor biosynthesis; riboflavin biosynthesis; 5-amino-6-(D-ribitylamino)uracil from GTP: step 1/4. Catalyzes the conversion of GTP to 2,5-diamino-6-ribosylamino-4(3H)-pyrimidinone 5'-phosphate (DARP), formate and pyrophosphate. The protein is GTP cyclohydrolase-2 of Shewanella sp. (strain MR-7).